The following is a 534-amino-acid chain: Phosphoenolpyruvate carboxykinase (ATP) (534 aa).

Substrate-binding residues include Arg60, Tyr195, and Lys201. ATP is bound by residues Lys201, His221, and 237–245 (GLSGTGKTT). The Mn(2+) site is built by Lys201 and His221. Asp258 contributes to the Mn(2+) binding site. ATP-binding residues include Glu287, Arg324, and Thr449. Residue Arg324 participates in substrate binding.

Belongs to the phosphoenolpyruvate carboxykinase (ATP) family. The cofactor is Mn(2+).

It localises to the cytoplasm. It catalyses the reaction oxaloacetate + ATP = phosphoenolpyruvate + ADP + CO2. The protein operates within carbohydrate biosynthesis; gluconeogenesis. Involved in the gluconeogenesis. Catalyzes the conversion of oxaloacetate (OAA) to phosphoenolpyruvate (PEP) through direct phosphoryl transfer between the nucleoside triphosphate and OAA. In Flavobacterium johnsoniae (strain ATCC 17061 / DSM 2064 / JCM 8514 / BCRC 14874 / CCUG 350202 / NBRC 14942 / NCIMB 11054 / UW101) (Cytophaga johnsonae), this protein is Phosphoenolpyruvate carboxykinase (ATP).